Reading from the N-terminus, the 133-residue chain is Small ribosomal subunit protein bS16 (133 aa).

Positions 99 to 133 (EKWQQNQTERRQKRLAVKTRRRQAKKAAEAKGAEA) are disordered. Basic residues predominate over residues 109 to 123 (RQKRLAVKTRRRQAK). Positions 124–133 (KAAEAKGAEA) are enriched in basic and acidic residues.

This sequence belongs to the bacterial ribosomal protein bS16 family.

The sequence is that of Small ribosomal subunit protein bS16 from Chlorobium limicola (strain DSM 245 / NBRC 103803 / 6330).